Here is a 308-residue protein sequence, read N- to C-terminus: Ornithine carbamoyltransferase (308 aa).

Residues 56–59 (STRT), glutamine 83, arginine 107, and 134–137 (HPCQ) each bind carbamoyl phosphate. Residues asparagine 165, aspartate 225, and 229 to 230 (SM) contribute to the L-ornithine site. Residues 266-267 (CL) and arginine 294 contribute to the carbamoyl phosphate site.

Belongs to the aspartate/ornithine carbamoyltransferase superfamily. OTCase family.

Its subcellular location is the cytoplasm. The catalysed reaction is carbamoyl phosphate + L-ornithine = L-citrulline + phosphate + H(+). It participates in amino-acid biosynthesis; L-arginine biosynthesis; L-arginine from L-ornithine and carbamoyl phosphate: step 1/3. Functionally, reversibly catalyzes the transfer of the carbamoyl group from carbamoyl phosphate (CP) to the N(epsilon) atom of ornithine (ORN) to produce L-citrulline. The polypeptide is Ornithine carbamoyltransferase (Cereibacter sphaeroides (strain ATCC 17029 / ATH 2.4.9) (Rhodobacter sphaeroides)).